Consider the following 552-residue polypeptide: Serine/threonine-protein kinase RIO2 (552 aa).

One can recognise a Protein kinase domain in the interval 97 to 272 (VGNQMGVGKE…DRDVKCIKDF (176 aa)). Lysine 123 lines the ATP pocket. Aspartate 228 acts as the Proton acceptor in catalysis. Phosphoserine is present on residues serine 332, serine 335, serine 337, serine 350, serine 362, serine 380, serine 382, serine 385, and serine 390. The Nuclear export signal signature appears at 399 to 408 (ALEEIKGQVV). 3 positions are modified to phosphoserine: serine 412, serine 417, and serine 442. Tyrosine 445 bears the Phosphotyrosine mark. Residue serine 548 is modified to Phosphoserine.

This sequence belongs to the protein kinase superfamily. RIO-type Ser/Thr kinase family. As to quaternary structure, associated with late 40S pre-ribosomal particles. Interacts with PLK1 (via its N-terminus). Mg(2+) is required as a cofactor. Autophosphorylated (in vitro). Phosphorylation at Ser-335, Ser-380, Ser-548 by PLK1 affects the timing of the metaphase-anaphase transition.

The protein resides in the cytoplasm. The enzyme catalyses L-seryl-[protein] + ATP = O-phospho-L-seryl-[protein] + ADP + H(+). It catalyses the reaction L-threonyl-[protein] + ATP = O-phospho-L-threonyl-[protein] + ADP + H(+). Functionally, serine/threonine-protein kinase involved in the final steps of cytoplasmic maturation of the 40S ribosomal subunit. Involved in export of the 40S pre-ribosome particles (pre-40S) from the nucleus to the cytoplasm. Its kinase activity is required for the release of NOB1, PNO1 and LTV1 from the late pre-40S and the processing of 18S-E pre-rRNA to the mature 18S rRNA. Regulates the timing of the metaphase-anaphase transition during mitotic progression, and its phosphorylation, most likely by PLK1, regulates this function. The chain is Serine/threonine-protein kinase RIO2 from Homo sapiens (Human).